A 719-amino-acid polypeptide reads, in one-letter code: Polyphosphate kinase (719 aa).

An ATP-binding site is contributed by N54. Residues R379 and R409 each contribute to the Mg(2+) site. The PLD phosphodiesterase domain maps to 434 to 468; the sequence is THLKTHSKIALVVKRMNNKLTSFIHLGTGNYNDKT. Catalysis depends on H439, which acts as the Phosphohistidine intermediate. Residues Y472, R568, and H596 each contribute to the ATP site.

This sequence belongs to the polyphosphate kinase 1 (PPK1) family. It depends on Mg(2+) as a cofactor. In terms of processing, an intermediate of this reaction is the autophosphorylated ppk in which a phosphate is covalently linked to a histidine residue through a N-P bond.

The catalysed reaction is [phosphate](n) + ATP = [phosphate](n+1) + ADP. Its function is as follows. Catalyzes the reversible transfer of the terminal phosphate of ATP to form a long-chain polyphosphate (polyP). This chain is Polyphosphate kinase, found in Staphylococcus saprophyticus subsp. saprophyticus (strain ATCC 15305 / DSM 20229 / NCIMB 8711 / NCTC 7292 / S-41).